We begin with the raw amino-acid sequence, 94 residues long: Pyrimidine/purine nucleoside phosphorylase 2 (94 aa).

Belongs to the nucleoside phosphorylase PpnP family.

It carries out the reaction a purine D-ribonucleoside + phosphate = a purine nucleobase + alpha-D-ribose 1-phosphate. It catalyses the reaction adenosine + phosphate = alpha-D-ribose 1-phosphate + adenine. The catalysed reaction is cytidine + phosphate = cytosine + alpha-D-ribose 1-phosphate. The enzyme catalyses guanosine + phosphate = alpha-D-ribose 1-phosphate + guanine. It carries out the reaction inosine + phosphate = alpha-D-ribose 1-phosphate + hypoxanthine. It catalyses the reaction thymidine + phosphate = 2-deoxy-alpha-D-ribose 1-phosphate + thymine. The catalysed reaction is uridine + phosphate = alpha-D-ribose 1-phosphate + uracil. The enzyme catalyses xanthosine + phosphate = alpha-D-ribose 1-phosphate + xanthine. Functionally, catalyzes the phosphorolysis of diverse nucleosides, yielding D-ribose 1-phosphate and the respective free bases. Can use uridine, adenosine, guanosine, cytidine, thymidine, inosine and xanthosine as substrates. Also catalyzes the reverse reactions. The chain is Pyrimidine/purine nucleoside phosphorylase 2 from Psychrobacter cryohalolentis (strain ATCC BAA-1226 / DSM 17306 / VKM B-2378 / K5).